The primary structure comprises 151 residues: Large ribosomal subunit protein bL9 (151 aa).

Belongs to the bacterial ribosomal protein bL9 family.

Binds to the 23S rRNA. The polypeptide is Large ribosomal subunit protein bL9 (Prochlorococcus marinus (strain MIT 9312)).